The chain runs to 397 residues: Elongation factor Tu (397 aa).

Residues 10 to 206 (KPHVNIGTIG…AVDEAIPTPP (197 aa)) enclose the tr-type G domain. The interval 19-26 (GHIDHGKT) is G1. 19-26 (GHIDHGKT) is a binding site for GTP. Threonine 26 is a Mg(2+) binding site. The segment at 62 to 66 (GITIS) is G2. The tract at residues 83 to 86 (DCPG) is G3. Residues 83-87 (DCPGH) and 138-141 (NKAD) each bind GTP. Residues 138 to 141 (NKAD) form a G4 region. The segment at 176 to 178 (SAL) is G5.

This sequence belongs to the TRAFAC class translation factor GTPase superfamily. Classic translation factor GTPase family. EF-Tu/EF-1A subfamily. As to quaternary structure, monomer.

It is found in the cytoplasm. It carries out the reaction GTP + H2O = GDP + phosphate + H(+). Functionally, GTP hydrolase that promotes the GTP-dependent binding of aminoacyl-tRNA to the A-site of ribosomes during protein biosynthesis. In Kitasatospora aureofaciens (Streptomyces aureofaciens), this protein is Elongation factor Tu.